A 264-amino-acid polypeptide reads, in one-letter code: Eukaryotic translation initiation factor 6 (264 aa).

The protein belongs to the eIF-6 family. As to quaternary structure, monomer. Associates with the 60S ribosomal subunit.

The protein resides in the cytoplasm. It is found in the nucleus. It localises to the nucleolus. In terms of biological role, binds to the 60S ribosomal subunit and prevents its association with the 40S ribosomal subunit to form the 80S initiation complex in the cytoplasm. May also be involved in ribosome biogenesis. The polypeptide is Eukaryotic translation initiation factor 6 (Toxoplasma gondii (strain ATCC 50861 / VEG)).